A 406-amino-acid polypeptide reads, in one-letter code: MDQSGMEIPVTLIIKAPNQKYSDQTISCFLNWTVGKLKTHLSNVYPSKPLTKDQRLVYSGRLLPDHLQLKDILRKQDEYHMVHLVCTSRTPPSSPKSSTNRESHEALASSSNSSSDHSGSTTPSSGQETLSLAVGSSSEGLRQRTLPQAQTDQAQSHQFPYVMQGNVDNQFPGQAAPPGFPVYPAFSPLQMLWWQQMYAHQYYMQYQAAVSAQATSNVNPTQPTTSQPLNLAHVPGEEPPPAPNLVAQENRPMNENVQMNAQGGPVLNEEDFNRDWLDWMYTFSRAAILLSIVYFYSSFSRFIMVMGAMLLVYLHQAGWFPFRQEGGHQQAPNNNAEVNNDGQNANNLELEEMERLMDDGLEDESGEDGGEDASAIQRPGLMASAWSFITTFFTSLIPEGPPQVAN.

The region spanning 10-89 (VTLIIKAPNQ…HMVHLVCTSR (80 aa)) is the Ubiquitin-like domain. Residues 86–154 (CTSRTPPSSP…TLPQAQTDQA (69 aa)) are disordered. Low complexity-rich tracts occupy residues 87–98 (TSRTPPSSPKSS) and 106–126 (ALASSSNSSSDHSGSTTPSSG). The segment covering 127 to 154 (QETLSLAVGSSSEGLRQRTLPQAQTDQA) has biased composition (polar residues). Residues 302–322 (FIMVMGAMLLVYLHQAGWFPF) form a helical membrane-spanning segment.

It is found in the membrane. Its function is as follows. Could be involved in the unfolded protein response (UPR) pathway. This chain is Homocysteine-responsive endoplasmic reticulum-resident ubiquitin-like domain member 2 protein (HERPUD2), found in Homo sapiens (Human).